The sequence spans 130 residues: Small ribosomal subunit protein uS9 (130 aa).

Belongs to the universal ribosomal protein uS9 family.

This is Small ribosomal subunit protein uS9 from Aster yellows witches'-broom phytoplasma (strain AYWB).